Here is a 162-residue protein sequence, read N- to C-terminus: Caveolin-2 (162 aa).

Topologically, residues methionine 1 to lysine 86 are cytoplasmic. A Phosphotyrosine; by SRC modification is found at tyrosine 19. Residues serine 20 and serine 23 each carry the phosphoserine modification. At tyrosine 27 the chain carries Phosphotyrosine; by SRC. Phosphoserine is present on serine 36. The segment at residues phenylalanine 87 to leucine 107 is an intramembrane region (helical). Residues serine 108–aspartate 162 lie on the Cytoplasmic side of the membrane.

Belongs to the caveolin family. Monomer or homodimer. Interacts with CAV1; the interaction forms a stable heterooligomeric complex that is required for targeting to lipid rafts and for caveolae formation. Tyrosine phosphorylated forms do not form heterooligomers with the Tyr-19-phosphorylated form existing as a monomer or dimer, and the Tyr-27-form as a monomer only. Interacts (tyrosine phosphorylated form) with the SH2 domain-containing proteins, RASA1, NCK1 and SRC. Interacts (tyrosine phosphorylated form) with INSR, the interaction (Tyr-27-phosphorylated form) is increased on insulin stimulation. Interacts (Tyr-19 phosphorylated form) with MAPK1 (phosphorylated form); the interaction, promoted by insulin, leads to nuclear location and MAPK1 activation. Interacts with STAT3; the interaction is increased on insulin-induced tyrosine phosphorylation leading to STAT activation. Phosphorylated on serine and tyrosine residues. CAV1 promotes phosphorylation on Ser-23 which then targets the complex to the plasma membrane, lipid rafts and caveolae. Phosphorylation on Ser-36 appears to modulate mitosis in endothelial cells. Phosphorylation on both Tyr-19 and Tyr-27 is required for insulin-induced 'Ser-727' phosphorylation of STAT3 and its activation. Phosphorylation on Tyr-19 is required for insulin-induced phosphorylation of MAPK1 and DNA binding of STAT3. Tyrosine phosphorylation is induced by both EGF and insulin (By. similarity).

The protein resides in the nucleus. It localises to the cytoplasm. It is found in the golgi apparatus membrane. The protein localises to the cell membrane. Its subcellular location is the membrane. The protein resides in the caveola. May act as a scaffolding protein within caveolar membranes. Interacts directly with G-protein alpha subunits and can functionally regulate their activity. Acts as an accessory protein in conjunction with CAV1 in targeting to lipid rafts and driving caveolae formation. The Ser-36 phosphorylated form has a role in modulating mitosis in endothelial cells. Positive regulator of cellular mitogenesis of the MAPK signaling pathway. Required for the insulin-stimulated nuclear translocation and activation of MAPK1 and STAT3, and the subsequent regulation of cell cycle progression. The protein is Caveolin-2 (CAV2) of Aotus nancymaae (Ma's night monkey).